The primary structure comprises 345 residues: 4-hydroxythreonine-4-phosphate dehydrogenase (345 aa).

His148 and Thr149 together coordinate substrate. A divalent metal cation is bound by residues His182, His227, and His282. The substrate site is built by Lys290, Asn299, and Arg308.

The protein belongs to the PdxA family. Homodimer. It depends on Zn(2+) as a cofactor. Requires Mg(2+) as cofactor. Co(2+) serves as cofactor.

It localises to the cytoplasm. The enzyme catalyses 4-(phosphooxy)-L-threonine + NAD(+) = 3-amino-2-oxopropyl phosphate + CO2 + NADH. It functions in the pathway cofactor biosynthesis; pyridoxine 5'-phosphate biosynthesis; pyridoxine 5'-phosphate from D-erythrose 4-phosphate: step 4/5. Functionally, catalyzes the NAD(P)-dependent oxidation of 4-(phosphooxy)-L-threonine (HTP) into 2-amino-3-oxo-4-(phosphooxy)butyric acid which spontaneously decarboxylates to form 3-amino-2-oxopropyl phosphate (AHAP). This is 4-hydroxythreonine-4-phosphate dehydrogenase from Bradyrhizobium diazoefficiens (strain JCM 10833 / BCRC 13528 / IAM 13628 / NBRC 14792 / USDA 110).